We begin with the raw amino-acid sequence, 624 residues long: tRNA uridine 5-carboxymethylaminomethyl modification enzyme MnmG (624 aa).

FAD contacts are provided by residues 16–21, Val-128, and Ser-183; that span reads GAGHAG. Residue 275 to 289 participates in NAD(+) binding; the sequence is GPRYCPSIEDKVVRF. Gln-372 contributes to the FAD binding site.

It belongs to the MnmG family. In terms of assembly, homodimer. Heterotetramer of two MnmE and two MnmG subunits. FAD is required as a cofactor.

It is found in the cytoplasm. Its function is as follows. NAD-binding protein involved in the addition of a carboxymethylaminomethyl (cmnm) group at the wobble position (U34) of certain tRNAs, forming tRNA-cmnm(5)s(2)U34. This Geobacter metallireducens (strain ATCC 53774 / DSM 7210 / GS-15) protein is tRNA uridine 5-carboxymethylaminomethyl modification enzyme MnmG.